Here is a 275-residue protein sequence, read N- to C-terminus: MTRIESTFETLKAQNKKALIPYVMAGDPSPNSFVDLLHDLVKHGADMIEVGLPFSDPMADGPTVALAGERALAGGTSTHQALAIVKKFREQDSSTPIILMGYLNPIEIIGYEAFIALCHESGVDGVLVVDLPPAESGNFVERLAAHDINKIFLLSPTTLPERRKQVMTHCGGYIYYVSLKGVTGSASLDTQAVGEQVQAIKQETNLPICVGFGIRDGQSAAAIGQYADGVIVGSELVKNFSGLSHTSRAEDIATAQASIMTKMDELRQALDALSA.

Active-site proton acceptor residues include Glu-49 and Asp-60.

This sequence belongs to the TrpA family. As to quaternary structure, tetramer of two alpha and two beta chains.

The catalysed reaction is (1S,2R)-1-C-(indol-3-yl)glycerol 3-phosphate + L-serine = D-glyceraldehyde 3-phosphate + L-tryptophan + H2O. It participates in amino-acid biosynthesis; L-tryptophan biosynthesis; L-tryptophan from chorismate: step 5/5. The alpha subunit is responsible for the aldol cleavage of indoleglycerol phosphate to indole and glyceraldehyde 3-phosphate. This Psychrobacter sp. (strain PRwf-1) protein is Tryptophan synthase alpha chain.